The primary structure comprises 484 residues: Acetyl-coenzyme A carboxylase carboxyl transferase subunit beta, chloroplastic (484 aa).

A CoA carboxyltransferase N-terminal domain is found at 223–484 (LWIQCDNCYG…LHAFFPLNKN (262 aa)). Cys-227, Cys-230, Cys-243, and Cys-246 together coordinate Zn(2+). The C4-type zinc finger occupies 227-246 (CDNCYGLMYKKVKINVCEQC).

This sequence belongs to the AccD/PCCB family. As to quaternary structure, acetyl-CoA carboxylase is a heterohexamer composed of biotin carboxyl carrier protein, biotin carboxylase and 2 subunits each of ACCase subunit alpha and ACCase plastid-coded subunit beta (accD). It depends on Zn(2+) as a cofactor.

The protein localises to the plastid. Its subcellular location is the chloroplast stroma. The catalysed reaction is N(6)-carboxybiotinyl-L-lysyl-[protein] + acetyl-CoA = N(6)-biotinyl-L-lysyl-[protein] + malonyl-CoA. The protein operates within lipid metabolism; malonyl-CoA biosynthesis; malonyl-CoA from acetyl-CoA: step 1/1. Component of the acetyl coenzyme A carboxylase (ACC) complex. Biotin carboxylase (BC) catalyzes the carboxylation of biotin on its carrier protein (BCCP) and then the CO(2) group is transferred by the transcarboxylase to acetyl-CoA to form malonyl-CoA. This chain is Acetyl-coenzyme A carboxylase carboxyl transferase subunit beta, chloroplastic, found in Capsella bursa-pastoris (Shepherd's purse).